Consider the following 415-residue polypeptide: U-box domain-containing protein 29 (415 aa).

The U-box domain occupies 11-85 (TVPSFFKCPI…NIWSDSIGRR (75 aa)). ARM repeat units follow at residues 221–263 (KSKL…TISK) and 265–307 (KRVR…TLSS).

In terms of assembly, binds to SD129 and SD25.

The enzyme catalyses S-ubiquitinyl-[E2 ubiquitin-conjugating enzyme]-L-cysteine + [acceptor protein]-L-lysine = [E2 ubiquitin-conjugating enzyme]-L-cysteine + N(6)-ubiquitinyl-[acceptor protein]-L-lysine.. It participates in protein modification; protein ubiquitination. Its function is as follows. Functions as an E3 ubiquitin ligase. This chain is U-box domain-containing protein 29 (PUB29), found in Arabidopsis thaliana (Mouse-ear cress).